The primary structure comprises 320 residues: Methionyl-tRNA formyltransferase (320 aa).

111-114 lines the (6S)-5,6,7,8-tetrahydrofolate pocket; that stretch reads SLLP.

This sequence belongs to the Fmt family.

The catalysed reaction is L-methionyl-tRNA(fMet) + (6R)-10-formyltetrahydrofolate = N-formyl-L-methionyl-tRNA(fMet) + (6S)-5,6,7,8-tetrahydrofolate + H(+). Its function is as follows. Attaches a formyl group to the free amino group of methionyl-tRNA(fMet). The formyl group appears to play a dual role in the initiator identity of N-formylmethionyl-tRNA by promoting its recognition by IF2 and preventing the misappropriation of this tRNA by the elongation apparatus. In Pediococcus pentosaceus (strain ATCC 25745 / CCUG 21536 / LMG 10740 / 183-1w), this protein is Methionyl-tRNA formyltransferase.